The chain runs to 97 residues: Serine protease inhibitor Kazal-type 8 (97 aa).

Residues 1–21 form the signal peptide; sequence MKGICSDAILVLATSMWMAFA. The Kazal-like domain maps to 36 to 96; that stretch reads DKTIVECLKN…TKLYDGQCEN (61 aa). 3 disulfides stabilise this stretch: cysteine 42–cysteine 76, cysteine 49–cysteine 73, and cysteine 62–cysteine 94. The N-linked (GlcNAc...) asparagine glycan is linked to asparagine 85.

The protein localises to the secreted. Probable serine protease inhibitor. The polypeptide is Serine protease inhibitor Kazal-type 8 (SPINK8) (Homo sapiens (Human)).